The sequence spans 549 residues: Glucose-6-phosphate isomerase (549 aa).

Glu-355 functions as the Proton donor in the catalytic mechanism. Catalysis depends on residues His-386 and Lys-514.

Belongs to the GPI family.

The protein localises to the cytoplasm. It carries out the reaction alpha-D-glucose 6-phosphate = beta-D-fructose 6-phosphate. Its pathway is carbohydrate biosynthesis; gluconeogenesis. The protein operates within carbohydrate degradation; glycolysis; D-glyceraldehyde 3-phosphate and glycerone phosphate from D-glucose: step 2/4. Its function is as follows. Catalyzes the reversible isomerization of glucose-6-phosphate to fructose-6-phosphate. The chain is Glucose-6-phosphate isomerase from Klebsiella pneumoniae subsp. pneumoniae (strain ATCC 700721 / MGH 78578).